Consider the following 321-residue polypeptide: Solute carrier family 25 member 33 (321 aa).

Solcar repeat units follow at residues 9 to 118, 126 to 213, and 231 to 315; these read ENTL…AKEQ, NSNI…LKKY, and TNFF…IVYL. A run of 6 helical transmembrane segments spans residues 12–32, 49–65, 121–141, 190–210, 233–253, and 298–318; these read LLHL…TCPL, VYYP…AGVV, GVFV…AAFV, LTAS…YESL, FFGL…VAYP, and QIPN…LLED.

This sequence belongs to the mitochondrial carrier (TC 2.A.29) family.

It is found in the mitochondrion inner membrane. It carries out the reaction UTP(in) + UDP(out) = UTP(out) + UDP(in). The catalysed reaction is dUTP(out) + UTP(in) = dUTP(in) + UTP(out). The enzyme catalyses 5-methyl-UTP(out) + UTP(in) = 5-methyl-UTP(in) + UTP(out). It catalyses the reaction 5-methyl-UDP(out) + UTP(in) = 5-methyl-UDP(in) + UTP(out). It carries out the reaction UTP(in) + CTP(out) = UTP(out) + CTP(in). The catalysed reaction is CDP(out) + UTP(in) = CDP(in) + UTP(out). The enzyme catalyses dCTP(out) + UTP(in) = dCTP(in) + UTP(out). It catalyses the reaction dCDP(out) + UTP(in) = dCDP(in) + UTP(out). It carries out the reaction UTP(in) + GTP(out) = UTP(out) + GTP(in). The catalysed reaction is UTP(in) + GDP(out) = UTP(out) + GDP(in). The enzyme catalyses dGTP(out) + UTP(in) = dGTP(in) + UTP(out). It catalyses the reaction dGDP(out) + UTP(in) = dGDP(in) + UTP(out). It carries out the reaction ITP(out) + UTP(in) = ITP(in) + UTP(out). Its function is as follows. Mitochondrial transporter that imports/exports pyrimidine nucleotides into and from mitochondria. Selectively transports uridine, thymidine, guanosine, cytosine and inosine (deoxy)nucleoside di- and triphosphates by an antiport mechanism. May import (deoxy)nucleoside triphosphates in exchange for intramitochondrial (deoxy)nucleoside diphosphates, thus providing precursors necessary for de novo synthesis of mitochondrial DNA and RNA while exporting products of their catabolism. Participates in mitochondrial genome maintenance, regulation of mitochondrial membrane potential and mitochondrial respiration. Upon INS or IGF1 stimulation regulates cell growth and proliferation by controlling mitochondrial DNA replication and transcription, the ratio of mitochondria-to nuclear-encoded components of the electron transport chain resulting in control of mitochondrial ROS production. Participates in dendritic cell endocytosis and may associate with mitochondrial oxidative phosphorylation. This Bos taurus (Bovine) protein is Solute carrier family 25 member 33 (SLC25A33).